We begin with the raw amino-acid sequence, 219 residues long: MSIQVFCDFDGTITNNDNIMSIMEKFAPPEAEEVKNRILSQELSIQEGVSQLFQLIPTNLHDEIIQFLIETAEIRNGFHEFIQFVNENNISFYVISGGMDFFVYPLLQGLIPKEQIYCNETDFSNEYITVNWPHPCDRLCQNHCGLCKSSLIRKLSDTNDFHIVIGDSITDLQAAKQADKVFARDFLITKCEENHISYTPFETFHDVKTELKHLLEVKL.

The protein belongs to the HAD-like hydrolase superfamily. MtnX family.

It catalyses the reaction 2-hydroxy-5-methylsulfanyl-3-oxopent-1-enyl phosphate + H2O = 1,2-dihydroxy-5-(methylsulfanyl)pent-1-en-3-one + phosphate. Its pathway is amino-acid biosynthesis; L-methionine biosynthesis via salvage pathway; L-methionine from S-methyl-5-thio-alpha-D-ribose 1-phosphate: step 4/6. In terms of biological role, dephosphorylates 2-hydroxy-3-keto-5-methylthiopentenyl-1-phosphate (HK-MTPenyl-1-P) yielding 1,2-dihydroxy-3-keto-5-methylthiopentene (DHK-MTPene). The polypeptide is 2-hydroxy-3-keto-5-methylthiopentenyl-1-phosphate phosphatase (Bacillus anthracis (strain A0248)).